Reading from the N-terminus, the 452-residue chain is MLDLSSNRLPNRASLITNRAFSAIERFLHIEAMSGVVLLLAAATALILANSQYTSLYEAFWHTPLGFNFGHFNLSWDLHFWVNDVLMTIFFLVAGMEIRREIHEGALASVKQAILPIVAAIGGVCIPAIIYLSFNFNGGHIYGWAVPTATDIAFALGILALLGKAIPSNLHIILLSLAIIDDIMAVLIIAFFYSTNLDPSGLAIAAAGIALVFFFQWISFASAWLYVLPGAIIWWGLMVTGIHPSLAGVILGMMTPVFPTRNLVSPLTTLSNAIQTLQEKNTNTDLHHISTTLKKMRKGQRDIVAPVIRIQKELHPWVAYGVMPIFAFANAGVSFANFDLASQKSFLIVLGIIIGLCIGKPLGILAASYLAVKSGLCRLPPHVTWTGILLIGFLAGIGFTMSIFVSMLAFQDIAQLNSAKIGVLCGSGLSALAGLGYGLIYIKNNKKTHNKP.

A run of 11 helical transmembrane segments spans residues 27 to 47, 78 to 98, 114 to 134, 141 to 161, 172 to 192, 201 to 221, 222 to 242, 316 to 336, 346 to 366, 388 to 408, and 421 to 441; these read FLHI…TALI, LHFW…GMEI, ILPI…YLSF, IYGW…ILAL, IILL…IAFF, GLAI…ISFA, SAWL…VTGI, PWVA…VSFA, FLIV…GILA, ILLI…VSML, and IGVL…GLIY.

The protein belongs to the NhaA Na(+)/H(+) (TC 2.A.33) antiporter family.

Its subcellular location is the cell inner membrane. The catalysed reaction is Na(+)(in) + 2 H(+)(out) = Na(+)(out) + 2 H(+)(in). Functionally, na(+)/H(+) antiporter that extrudes sodium in exchange for external protons. The polypeptide is Na(+)/H(+) antiporter NhaA (Bartonella bacilliformis (strain ATCC 35685 / KC583 / Herrer 020/F12,63)).